Consider the following 164-residue polypeptide: Transcription factor E (164 aa).

Positions 5–87 (NDKVIRGYLR…LWHLDFSDIE (83 aa)) constitute an HTH TFE/IIEalpha-type domain.

The protein belongs to the TFE family. In terms of assembly, monomer. Interaction with RNA polymerase subunits RpoF and RpoE is necessary for Tfe stimulatory transcription activity. Able to interact with Tbp and RNA polymerase in the absence of DNA promoter. Interacts both with the preinitiation and elongation complexes.

Transcription factor that plays a role in the activation of archaeal genes transcribed by RNA polymerase. Facilitates transcription initiation by enhancing TATA-box recognition by TATA-box-binding protein (Tbp), and transcription factor B (Tfb) and RNA polymerase recruitment. Not absolutely required for transcription in vitro, but particularly important in cases where Tbp or Tfb function is not optimal. It dynamically alters the nucleic acid-binding properties of RNA polymerases by stabilizing the initiation complex and destabilizing elongation complexes. Seems to translocate with the RNA polymerase following initiation and acts by binding to the non template strand of the transcription bubble in elongation complexes. In Methanosarcina mazei (strain ATCC BAA-159 / DSM 3647 / Goe1 / Go1 / JCM 11833 / OCM 88) (Methanosarcina frisia), this protein is Transcription factor E.